The primary structure comprises 173 residues: RTX-III toxin-activating lysine-acyltransferase ApxIIC (173 aa).

Residues His29 and Asp98 contribute to the active site.

It belongs to the RTX toxin acyltransferase family. In terms of assembly, homodimer.

The protein resides in the cytoplasm. It carries out the reaction a fatty acyl-[ACP] + L-lysyl-[protein] = N(6)-(fatty acyl)-L-lysyl-[protein] + holo-[ACP] + H(+). Protein-lysine acyltransferase that catalyzes fatty acylation of the protoxin, thereby converting it to the active toxin. This chain is RTX-III toxin-activating lysine-acyltransferase ApxIIC (apxIIIC), found in Actinobacillus pleuropneumoniae (Haemophilus pleuropneumoniae).